Reading from the N-terminus, the 179-residue chain is MARLKEIYRKEIAPKLKEELQLANVMEVPRVTKITLNMGLGEAVGDKKIIENAVADLEKITGQKPVVTYARKSIAGFKIREGWPIGVKVTLRSDRMYEFLDRLLSISLPRVRDFRGLNAKSFDGRGNYSMGVKEQIIFPEIDYDKIDALRGLDITLTTTARTDDEGRALLRAFKFPFRN.

Belongs to the universal ribosomal protein uL5 family. Part of the 50S ribosomal subunit; part of the 5S rRNA/L5/L18/L25 subcomplex. Contacts the 5S rRNA and the P site tRNA. Forms a bridge to the 30S subunit in the 70S ribosome.

In terms of biological role, this is one of the proteins that bind and probably mediate the attachment of the 5S RNA into the large ribosomal subunit, where it forms part of the central protuberance. In the 70S ribosome it contacts protein S13 of the 30S subunit (bridge B1b), connecting the 2 subunits; this bridge is implicated in subunit movement. Contacts the P site tRNA; the 5S rRNA and some of its associated proteins might help stabilize positioning of ribosome-bound tRNAs. This Pseudomonas aeruginosa (strain LESB58) protein is Large ribosomal subunit protein uL5.